The following is a 286-amino-acid chain: 4-hydroxy-3-methylbut-2-enyl diphosphate reductase (286 aa).

Cys12 is a [4Fe-4S] cluster binding site. (2E)-4-hydroxy-3-methylbut-2-enyl diphosphate-binding residues include His47 and His80. Dimethylallyl diphosphate contacts are provided by His47 and His80. His47 and His80 together coordinate isopentenyl diphosphate. Cys102 is a [4Fe-4S] cluster binding site. His130 contacts (2E)-4-hydroxy-3-methylbut-2-enyl diphosphate. His130 is a binding site for dimethylallyl diphosphate. Position 130 (His130) interacts with isopentenyl diphosphate. The active-site Proton donor is the Glu132. Thr170 is a (2E)-4-hydroxy-3-methylbut-2-enyl diphosphate binding site. Cys198 serves as a coordination point for [4Fe-4S] cluster. 3 residues coordinate (2E)-4-hydroxy-3-methylbut-2-enyl diphosphate: Ser226, Asn228, and Ser270. Positions 226, 228, and 270 each coordinate dimethylallyl diphosphate. Isopentenyl diphosphate is bound by residues Ser226, Asn228, and Ser270.

The protein belongs to the IspH family. The cofactor is [4Fe-4S] cluster.

It carries out the reaction isopentenyl diphosphate + 2 oxidized [2Fe-2S]-[ferredoxin] + H2O = (2E)-4-hydroxy-3-methylbut-2-enyl diphosphate + 2 reduced [2Fe-2S]-[ferredoxin] + 2 H(+). It catalyses the reaction dimethylallyl diphosphate + 2 oxidized [2Fe-2S]-[ferredoxin] + H2O = (2E)-4-hydroxy-3-methylbut-2-enyl diphosphate + 2 reduced [2Fe-2S]-[ferredoxin] + 2 H(+). It functions in the pathway isoprenoid biosynthesis; dimethylallyl diphosphate biosynthesis; dimethylallyl diphosphate from (2E)-4-hydroxy-3-methylbutenyl diphosphate: step 1/1. It participates in isoprenoid biosynthesis; isopentenyl diphosphate biosynthesis via DXP pathway; isopentenyl diphosphate from 1-deoxy-D-xylulose 5-phosphate: step 6/6. In terms of biological role, catalyzes the conversion of 1-hydroxy-2-methyl-2-(E)-butenyl 4-diphosphate (HMBPP) into a mixture of isopentenyl diphosphate (IPP) and dimethylallyl diphosphate (DMAPP). Acts in the terminal step of the DOXP/MEP pathway for isoprenoid precursor biosynthesis. The chain is 4-hydroxy-3-methylbut-2-enyl diphosphate reductase from Desulfovibrio desulfuricans (strain ATCC 27774 / DSM 6949 / MB).